A 450-amino-acid polypeptide reads, in one-letter code: tRNA-aminoacylation cofactor arc1 (450 aa).

Residues 208–278 (QRPSVIKKDK…KEPPKAATPV (71 aa)) form a disordered region. Composition is skewed to basic and acidic residues over residues 213 to 225 (IKKD…EGKP) and 233 to 247 (SVEK…AKKE). Over residues 248-261 (KQNKKEKKDKKDKK) the composition is skewed to basic residues. The segment covering 262 to 272 (DKKEKAPKEPP) has biased composition (basic and acidic residues). Residues 278–382 (VPSMIDFRIG…ENAEIGDRLT (105 aa)) form the tRNA-binding domain.

This sequence belongs to the tRNA-aminoacylation cofactor ARC1 family. As to quaternary structure, component of a yeast aminoacyl-tRNA synthase (aaRS) complex formed by methionyl-tRNA synthase, glutamyl-tRNA synthase and the tRNA aminoacylation cofactor arc1 in a stoichiometric complex. Interacts with rar1/mes1 and gus1.

Its subcellular location is the cytoplasm. Binds to tRNA and functions as a cofactor for the methionyl-tRNA synthetase (MetRS) and glutamyl-tRNA synthetase (GluRS). Forms a complex with MetRS and GluRS and increases their affinity for cognate tRNAs due to the presence of a tRNA binding domain in its middle and C-terminal part. This chain is tRNA-aminoacylation cofactor arc1, found in Schizosaccharomyces pombe (strain 972 / ATCC 24843) (Fission yeast).